Here is a 740-residue protein sequence, read N- to C-terminus: MMDWFMSTVYFYGPEINVSNRVVRNFSSDIENFLRISFVDEDCEKLRATDLSPRSASGHDANRTALYKRVLSVLSDGITIGGKNFEFLAFSSSQLRDNSAWMFASRQGLAASDIRTWMGDFRNIRNVAKYAARLGQSFSSSTETLKVQKYEVEEISDIKNGTQHVFSDGIGKISSAFANEVAMKCNLKRFAPSAFQIRYGGYKGVVAVDPTSRWKLSLRKSMLKFQSDNITVDVLAYSKYQPGFLNRQLITLLSTLGVRDSVFEQKQEEAVNQLNKMVTDPQAAIEAIELMPMGEITNAVKELLLCGYQPDDEPYLSMLLQTFRASKLLELKTKSRILIPKGRAMMGCLDETRTLKYGQVFIRATSGVNDNDRFTVTGKVVIAKNPCLHPGDIRILHAVDVPVLHHMFNCVVFPQQGPRPHPNECSGSDLDGDIYFVSWDPSLIPPRMVTPMDYTPAPTETLDHDVTIEEVEEYFTNYIVNESLGMIANAHVVFADKEDLKAESSPCIELAKLFSIAVDFPKTGVPALIPPELHVKEYPDFMEKLDKVTYESKGVIGKLYREIKKHTPHIKHFTREVARRSYDTDMIVDGYEDYITEAMALKDEYDFKLGNLMDHYGIKSEAEIISGCILKMAKNFTKKSDADAIRLAVRSLRKEARSRFSEMSLDDNGHGHDASEAKASAWYHVTYHPEFWGCYNEGYERPHFISFPWCIYEKLLRIKQRRKFVRKMQPELFSLHNLRI.

This sequence belongs to the RdRP family.

The enzyme catalyses RNA(n) + a ribonucleoside 5'-triphosphate = RNA(n+1) + diphosphate. In terms of biological role, probably involved in the RNA silencing pathway and required for the generation of small interfering RNAs (siRNAs). This is Probable RNA-dependent RNA polymerase 1 (RDR1) from Oryza sativa subsp. japonica (Rice).